Here is a 518-residue protein sequence, read N- to C-terminus: Xylose import ATP-binding protein XylG (518 aa).

ABC transporter domains follow at residues 6 to 245 and 262 to 507; these read LQMN…VGRE and FEAR…LSHP. ATP is bound at residue 38 to 45; it reads GENGTGKS.

The protein belongs to the ABC transporter superfamily. Xylose importer (TC 3.A.1.2.4) family. As to quaternary structure, the complex is composed of two ATP-binding proteins (XylG), two transmembrane proteins (XylH) and a solute-binding protein (XylF).

The protein localises to the cell inner membrane. It catalyses the reaction D-xylose(out) + ATP + H2O = D-xylose(in) + ADP + phosphate + H(+). Part of the ABC transporter complex XylFGH involved in xylose import. Responsible for energy coupling to the transport system. This is Xylose import ATP-binding protein XylG from Pseudomonas savastanoi pv. phaseolicola (strain 1448A / Race 6) (Pseudomonas syringae pv. phaseolicola (strain 1448A / Race 6)).